The chain runs to 366 residues: Chorismate synthase (366 aa).

R47 is a binding site for NADP(+). FMN contacts are provided by residues 124-126, G286, 301-305, and R327; these read RSS and KPVAT.

This sequence belongs to the chorismate synthase family. In terms of assembly, homotetramer. FMNH2 serves as cofactor.

The enzyme catalyses 5-O-(1-carboxyvinyl)-3-phosphoshikimate = chorismate + phosphate. The protein operates within metabolic intermediate biosynthesis; chorismate biosynthesis; chorismate from D-erythrose 4-phosphate and phosphoenolpyruvate: step 7/7. Its function is as follows. Catalyzes the anti-1,4-elimination of the C-3 phosphate and the C-6 proR hydrogen from 5-enolpyruvylshikimate-3-phosphate (EPSP) to yield chorismate, which is the branch point compound that serves as the starting substrate for the three terminal pathways of aromatic amino acid biosynthesis. This reaction introduces a second double bond into the aromatic ring system. In Methylacidiphilum infernorum (isolate V4) (Methylokorus infernorum (strain V4)), this protein is Chorismate synthase.